The primary structure comprises 104 residues: UPF0145 protein Hlac_1015 (104 aa).

Belongs to the UPF0145 family.

The protein is UPF0145 protein Hlac_1015 of Halorubrum lacusprofundi (strain ATCC 49239 / DSM 5036 / JCM 8891 / ACAM 34).